The chain runs to 485 residues: N-succinylglutamate 5-semialdehyde dehydrogenase 2 (485 aa).

221 to 226 (GSAAAG) serves as a coordination point for NAD(+). Residues Glu-244 and Cys-279 contribute to the active site.

The protein belongs to the aldehyde dehydrogenase family. AstD subfamily.

It catalyses the reaction N-succinyl-L-glutamate 5-semialdehyde + NAD(+) + H2O = N-succinyl-L-glutamate + NADH + 2 H(+). Its pathway is amino-acid degradation; L-arginine degradation via AST pathway; L-glutamate and succinate from L-arginine: step 4/5. In terms of biological role, catalyzes the NAD-dependent reduction of succinylglutamate semialdehyde into succinylglutamate. The chain is N-succinylglutamate 5-semialdehyde dehydrogenase 2 from Caulobacter vibrioides (strain ATCC 19089 / CIP 103742 / CB 15) (Caulobacter crescentus).